Consider the following 58-residue polypeptide: Small ribosomal subunit protein bS21 (58 aa).

The segment at 37–58 (FYDKPSVKKRAKSKAAAKYRGR) is disordered. Positions 43–58 (VKKRAKSKAAAKYRGR) are enriched in basic residues.

Belongs to the bacterial ribosomal protein bS21 family.

The polypeptide is Small ribosomal subunit protein bS21 (rpsU) (Chlamydia muridarum (strain MoPn / Nigg)).